The chain runs to 207 residues: U1 small nuclear ribonucleoprotein C (207 aa).

Residues 4 to 36 (YYCDYCDTYLTHDSPSVRKQHNAGYKHKANVRI) form a Matrin-type zinc finger. 2 stretches are compositionally biased toward pro residues: residues 105-115 (PPQGYMPPPGV) and 122-131 (PGAPLPPPPQ). The tract at residues 105–207 (PPQGYMPPPG…PSAESPESNE (103 aa)) is disordered. Over residues 132–144 (NGILRPPGMAPIP) the composition is skewed to low complexity. Over residues 162-183 (GPPPNYNGLPPPPPYHTNPAAP) the composition is skewed to pro residues. Low complexity predominate over residues 184 to 207 (PSGNFNNPNLNNPNPSAESPESNE).

The protein belongs to the U1 small nuclear ribonucleoprotein C family. In terms of assembly, U1 snRNP is composed of the 7 core Sm proteins B/B', D1, D2, D3, E, F and G that assemble in a heptameric protein ring on the Sm site of the small nuclear RNA to form the core snRNP, and at least 3 U1 snRNP-specific proteins U1-70K, U1-A and U1-C. U1-C interacts with U1 snRNA and the 5' splice-site region of the pre-mRNA.

Its subcellular location is the nucleus. Component of the spliceosomal U1 snRNP, which is essential for recognition of the pre-mRNA 5' splice-site and the subsequent assembly of the spliceosome. U1-C is directly involved in initial 5' splice-site recognition for both constitutive and regulated alternative splicing. The interaction with the 5' splice-site seems to precede base-pairing between the pre-mRNA and the U1 snRNA. Stimulates commitment or early (E) complex formation by stabilizing the base pairing of the 5' end of the U1 snRNA and the 5' splice-site region. This Arabidopsis thaliana (Mouse-ear cress) protein is U1 small nuclear ribonucleoprotein C.